The primary structure comprises 292 residues: Shikimate dehydrogenase (NADP(+)) (292 aa).

Shikimate is bound by residues 22 to 24 (SLS) and Ser-69. Lys-73 serves as the catalytic Proton acceptor. Shikimate-binding residues include Asn-94 and Asp-111. Residues 135–139 (GVGGA) and Ile-236 each bind NADP(+). Position 238 (Tyr-238) interacts with shikimate. Gly-260 is a binding site for NADP(+).

Belongs to the shikimate dehydrogenase family. Homodimer.

It carries out the reaction shikimate + NADP(+) = 3-dehydroshikimate + NADPH + H(+). Its pathway is metabolic intermediate biosynthesis; chorismate biosynthesis; chorismate from D-erythrose 4-phosphate and phosphoenolpyruvate: step 4/7. Involved in the biosynthesis of the chorismate, which leads to the biosynthesis of aromatic amino acids. Catalyzes the reversible NADPH linked reduction of 3-dehydroshikimate (DHSA) to yield shikimate (SA). The sequence is that of Shikimate dehydrogenase (NADP(+)) from Streptococcus pyogenes serotype M18 (strain MGAS8232).